Consider the following 143-residue polypeptide: Beta/delta-urticatoxin-Uf2a (143 aa).

A signal peptide spans methionine 1–alanine 18. The propeptide occupies phenylalanine 19–asparagine 80. Intrachain disulfides connect cysteine 83-cysteine 100, cysteine 90-cysteine 105, cysteine 99-cysteine 113, cysteine 115-cysteine 129, cysteine 122-cysteine 134, and cysteine 128-cysteine 142.

The protein belongs to the urticatoxin-2 family. Expressed in trichomes, that are stiff epidermal hairs located on the surface of petioles and leaves.

It localises to the secreted. Its function is as follows. Plant defense neurotoxin that causes pain and systemic symptoms in mammals via modulation of voltage-gated sodium channels (Nav). Potent modulator of human Nav1.5/SCN5A (EC(50)=55 nM), Nav1.6/SCN8A (EC(50)=0.86 nM), and Nav1.7/SCN9A (EC(50)=208 nM), where it shifts the activation threshold to more negative potentials and delays fast inactivation. Also shifts the voltage-dependence of steady-state fast inactivation of Nav1.6/SCN8A, but not that of Nav1.5/SCN5A or Nav1.7/SCN9A. On Nav1.7/SCN9A, principally acts by binding to extracellular loops of domain IV (Nav site 3). Does not affect current response of the tetrodotoxin (TTX)-resistant Nav1.8/SCN10A sodium channel. In vivo, intraplantar injection into mice causes numerous dose-dependent, immediate, and long-lasting spontaneous pain behaviors, while no swelling is observed in the injected paw. At the highest doses tested, systemic symptoms including hypokinesia and hypersalivation are observed. This chain is Beta/delta-urticatoxin-Uf2a, found in Urtica ferox (Tree nettle).